The sequence spans 212 residues: ATP phosphoribosyltransferase (212 aa).

This sequence belongs to the ATP phosphoribosyltransferase family. Short subfamily. In terms of assembly, heteromultimer composed of HisG and HisZ subunits.

It is found in the cytoplasm. It catalyses the reaction 1-(5-phospho-beta-D-ribosyl)-ATP + diphosphate = 5-phospho-alpha-D-ribose 1-diphosphate + ATP. It participates in amino-acid biosynthesis; L-histidine biosynthesis; L-histidine from 5-phospho-alpha-D-ribose 1-diphosphate: step 1/9. Its function is as follows. Catalyzes the condensation of ATP and 5-phosphoribose 1-diphosphate to form N'-(5'-phosphoribosyl)-ATP (PR-ATP). Has a crucial role in the pathway because the rate of histidine biosynthesis seems to be controlled primarily by regulation of HisG enzymatic activity. This Prochlorococcus marinus (strain MIT 9312) protein is ATP phosphoribosyltransferase.